Consider the following 339-residue polypeptide: Phenylalanine--tRNA ligase alpha subunit (339 aa).

E250 is a Mg(2+) binding site.

Belongs to the class-II aminoacyl-tRNA synthetase family. Phe-tRNA synthetase alpha subunit type 1 subfamily. Tetramer of two alpha and two beta subunits. Mg(2+) is required as a cofactor.

The protein localises to the cytoplasm. It catalyses the reaction tRNA(Phe) + L-phenylalanine + ATP = L-phenylalanyl-tRNA(Phe) + AMP + diphosphate + H(+). The polypeptide is Phenylalanine--tRNA ligase alpha subunit (Flavobacterium psychrophilum (strain ATCC 49511 / DSM 21280 / CIP 103535 / JIP02/86)).